An 842-amino-acid polypeptide reads, in one-letter code: 9-beta-pimara-7,15-diene synthase, chloroplastic (842 aa).

A chloroplast-targeting transit peptide spans 1 to 56 (MASPMEAVARSSLVLAPRRRRALGLLPAAAAAAPFVLDCRRRHNGGMRRPHVSFAC). The Mg(2+) site is built by aspartate 591, aspartate 595, asparagine 735, serine 739, and glutamate 743. The DDXXD motif motif lies at 591 to 595 (DDFFD).

The protein belongs to the terpene synthase family. Requires Mg(2+) as cofactor. Expressed in roots.

The protein localises to the plastid. It localises to the chloroplast. The enzyme catalyses 9alpha-copalyl diphosphate = 9beta-pimara-7,15-diene + diphosphate. In terms of biological role, involved in the biosynthesis of momilactone A and B phytoalexins. Catalyzes the conversion of syn-copalyl diphosphate to the phytoalexin precursor syn-pimara-7,15-diene. The protein is 9-beta-pimara-7,15-diene synthase, chloroplastic of Oryza sativa subsp. japonica (Rice).